The primary structure comprises 175 residues: 3-hydroxyanthranilate 3,4-dioxygenase (175 aa).

R45 lines the O2 pocket. Positions 49, 55, and 93 each coordinate Fe cation. Residue E55 coordinates substrate. Substrate-binding residues include R97 and E107. The a divalent metal cation site is built by C122, C125, C159, and C162.

The protein belongs to the 3-HAO family. The cofactor is Fe(2+).

It is found in the cytoplasm. The catalysed reaction is 3-hydroxyanthranilate + O2 = (2Z,4Z)-2-amino-3-carboxymuconate 6-semialdehyde. It participates in cofactor biosynthesis; NAD(+) biosynthesis; quinolinate from L-kynurenine: step 3/3. Catalyzes the oxidative ring opening of 3-hydroxyanthranilate to 2-amino-3-carboxymuconate semialdehyde, which spontaneously cyclizes to quinolinate. This chain is 3-hydroxyanthranilate 3,4-dioxygenase, found in Lodderomyces elongisporus (strain ATCC 11503 / CBS 2605 / JCM 1781 / NBRC 1676 / NRRL YB-4239) (Yeast).